A 235-amino-acid chain; its full sequence is Peroxynitrite isomerase 2 (235 aa).

The GXWXGXG signature appears at 82–88; the sequence is GVWRGEG. Heme b is bound by residues Lys-198 and His-225.

The protein belongs to the nitrobindin family. As to quaternary structure, homodimer. It depends on heme b as a cofactor.

The enzyme catalyses peroxynitrite = nitrate. The protein operates within nitrogen metabolism. Heme-binding protein able to scavenge peroxynitrite and to protect free L-tyrosine against peroxynitrite-mediated nitration, by acting as a peroxynitrite isomerase that converts peroxynitrite to nitrate. Therefore, this protein likely plays a role in peroxynitrite sensing and in the detoxification of reactive nitrogen and oxygen species (RNS and ROS, respectively). Is able to bind nitric oxide (NO) in vitro, but may act as a sensor of peroxynitrite levels in vivo. The protein is Peroxynitrite isomerase 2 of Mycolicibacterium paratuberculosis (strain ATCC BAA-968 / K-10) (Mycobacterium paratuberculosis).